The chain runs to 1479 residues: Rhoptry neck protein 2 (1479 aa).

The first 24 residues, methionine 1–serine 24, serve as a signal peptide directing secretion. At leucine 25–alanine 1277 the chain is on the cytoplasmic side. Disordered regions lie at residues proline 49 to proline 68 and valine 291 to serine 316. The helical transmembrane segment at isoleucine 1278–isoleucine 1298 threads the bilayer. The tract at residues aspartate 1297–threonine 1333 is interaction with AMA1. Topologically, residues valine 1299–alanine 1479 are extracellular. Cysteines 1313 and 1323 form a disulfide. The disordered stretch occupies residues threonine 1419–threonine 1445.

It belongs to the apicomplexan parasites RON2 family. As to quaternary structure, component of the moving junction (MJ) complex, composed of AMA1, a transmembrane protein on the parasite surface, and a complex of the rhoptry neck proteins RON2, RON4, RON5 and RON8 localized to the cytoplasmic face of the host plasma membrane. Interacts (via C-terminus) with AMA1 (via ectodomain); RON2 serves as the receptor for AMA1 on the host plasma membrane. AMA1 and the RON proteins are initially in distinct compartments within the parasite, namely the micronemes and the rhoptries, and interaction happens only upon initiation of invasion when the micronemes and rhoptries discharge.

The protein localises to the secreted. The protein resides in the cytoplasm. Its subcellular location is the host cell membrane. In terms of biological role, essential rhoptry neck protein that plays an important role in host cell invasion. Upon host invasion by tachyzoites, the protein is injected into the host cell where it functions as a receptor for apical membrane antigen 1 (AMA1) on the parasite. Part of the moving junction (MJ) complex, a ringlike structure formed between the plasma membranes of the apical tip of the parasite and the target host cell. During invasion, the MJ migrates from the anterior to the posterior of the parasite, leading to internalization of the parasite into a parasitophorous vacuole (PV). This Toxoplasma gondii (strain ATCC 50611 / Me49) protein is Rhoptry neck protein 2 (RON2).